A 422-amino-acid polypeptide reads, in one-letter code: Histidine--tRNA ligase (422 aa).

It belongs to the class-II aminoacyl-tRNA synthetase family. In terms of assembly, homodimer.

It is found in the cytoplasm. It carries out the reaction tRNA(His) + L-histidine + ATP = L-histidyl-tRNA(His) + AMP + diphosphate + H(+). This chain is Histidine--tRNA ligase, found in Mycolicibacterium vanbaalenii (strain DSM 7251 / JCM 13017 / BCRC 16820 / KCTC 9966 / NRRL B-24157 / PYR-1) (Mycobacterium vanbaalenii).